The primary structure comprises 506 residues: Kynureninase 1 (506 aa).

Pyridoxal 5'-phosphate is bound by residues Leu141, Thr142, 169-172, Asp254, His257, and Tyr279; that span reads FPSD. Lys280 is subject to N6-(pyridoxal phosphate)lysine. Residues 303-319 show a composition bias toward low complexity; sequence ETAPTTTPDGTNGNPKT. Residues 303-322 form a disordered region; that stretch reads ETAPTTTPDGTNGNPKTISD. Pyridoxal 5'-phosphate-binding residues include Trp334 and Asn362.

This sequence belongs to the kynureninase family. In terms of assembly, homodimer. It depends on pyridoxal 5'-phosphate as a cofactor.

The protein localises to the cytoplasm. The catalysed reaction is L-kynurenine + H2O = anthranilate + L-alanine + H(+). It carries out the reaction 3-hydroxy-L-kynurenine + H2O = 3-hydroxyanthranilate + L-alanine + H(+). Its pathway is amino-acid degradation; L-kynurenine degradation; L-alanine and anthranilate from L-kynurenine: step 1/1. The protein operates within cofactor biosynthesis; NAD(+) biosynthesis; quinolinate from L-kynurenine: step 2/3. In terms of biological role, catalyzes the cleavage of L-kynurenine (L-Kyn) and L-3-hydroxykynurenine (L-3OHKyn) into anthranilic acid (AA) and 3-hydroxyanthranilic acid (3-OHAA), respectively. The chain is Kynureninase 1 from Phaeosphaeria nodorum (strain SN15 / ATCC MYA-4574 / FGSC 10173) (Glume blotch fungus).